Consider the following 259-residue polypeptide: Type III pantothenate kinase (259 aa).

Residue 6 to 13 (DAGNTNIV) coordinates ATP. Substrate is bound by residues Tyr-100 and 107–110 (GADR). Residue Asp-109 is the Proton acceptor of the active site. Asp-129 contacts K(+). Residue Thr-132 coordinates ATP. Thr-184 serves as a coordination point for substrate.

The protein belongs to the type III pantothenate kinase family. Homodimer. NH4(+) is required as a cofactor. It depends on K(+) as a cofactor.

It is found in the cytoplasm. The enzyme catalyses (R)-pantothenate + ATP = (R)-4'-phosphopantothenate + ADP + H(+). It functions in the pathway cofactor biosynthesis; coenzyme A biosynthesis; CoA from (R)-pantothenate: step 1/5. In terms of biological role, catalyzes the phosphorylation of pantothenate (Pan), the first step in CoA biosynthesis. In Clostridium novyi (strain NT), this protein is Type III pantothenate kinase.